Reading from the N-terminus, the 495-residue chain is WD repeat-containing protein 37 (495 aa).

Polar residues-rich tracts occupy residues 1–13 (MPTESASCSTARQ) and 22–31 (SLSIRRTNSS). The disordered stretch occupies residues 1 to 50 (MPTESASCSTARQTKQKRKSHSLSIRRTNSSEQERTGLPRDMLEGQDSKL). Basic and acidic residues predominate over residues 32 to 47 (EQERTGLPRDMLEGQD). 2 WD repeats span residues 154–194 (GHRD…CLVK) and 197–236 (GHVGSVNSIKFHPSEQLALTASGDQTAHIWRYAVQLPTPQ). The disordered stretch occupies residues 237 to 266 (PVADTSQISGEDEVECSDKDEPDLDGDVSS). Positions 246 to 264 (GEDEVECSDKDEPDLDGDV) are enriched in acidic residues. WD repeat units follow at residues 280–319 (SHQGVVIAADWLVGGKQAVTASWDRTANLYDVETSELVHS), 322–361 (GHDQELTHCCTHPTQRLVVTSSRDTTFRLWDFRDPSIHSV), 366–404 (GHTDTVTSAVFTVGDNVVSGSDDRTVKVWDLKNMRSPIA), 407–446 (RTDSAINRINVCVGQKIIALPHDNRQVRLFDMSGVRLARL), and 453–494 (GHRR…LLQE).

In terms of assembly, forms homodimers. Interacts with PACS1. Interacts with PACS2.

The protein resides in the cytoplasm. Its subcellular location is the nucleus. In terms of biological role, required for normal ER Ca2+ handling in lymphocytes. Together with PACS1, it plays an essential role in stabilizing peripheral lymphocyte populations. The polypeptide is WD repeat-containing protein 37 (WDR37) (Pongo abelii (Sumatran orangutan)).